Reading from the N-terminus, the 245-residue chain is Purine nucleoside phosphorylase (245 aa).

His7 serves as a coordination point for a purine D-ribonucleoside. Residues Gly23 to Arg27, Arg45, and Arg88 to Ser91 each bind phosphate. A purine D-ribonucleoside is bound at residue Met183–Glu184. Residue Asp206 is the Proton donor of the active site.

The protein belongs to the PNP/MTAP phosphorylase family. Homohexamer; trimer of homodimers.

The catalysed reaction is inosine + phosphate = alpha-D-ribose 1-phosphate + hypoxanthine. It catalyses the reaction guanosine + phosphate = alpha-D-ribose 1-phosphate + guanine. The enzyme catalyses 2'-deoxyguanosine + phosphate = 2-deoxy-alpha-D-ribose 1-phosphate + guanine. It carries out the reaction 2'-deoxyinosine + phosphate = 2-deoxy-alpha-D-ribose 1-phosphate + hypoxanthine. The catalysed reaction is S-methyl-5'-thioinosine + phosphate = 5-(methylsulfanyl)-alpha-D-ribose 1-phosphate + hypoxanthine. The protein operates within purine metabolism; purine nucleoside salvage. Its activity is regulated as follows. Inhibited by Immucillin-H and 5'-methylthio-Immucillin-H. Inhibited by 5'-deaza-1'-aza-2c-deoxy-1'-(9-methylene)-Immucilin-G (DADMe-ImmG). Its function is as follows. As part of the purine salvage pathway, catalyzes the phosphorolytic breakdown of the N-glycosidic bond in the beta-(deoxy)ribonucleoside molecules, with the formation of the corresponding free purine bases and pentose-1-phosphate. Preferentially acts on inosine and guanosine, and to a lesser extent on 2'-deoxyguanosine and guanosine. Also catalyzes the phosphorylation of S-methyl-5'-thioinosine (MTI) to hypoxanthine; MTI is produced by adenosine deaminase (ADA)-mediated breakdown of S-methyl-5'-thioadenosine (MTA), a major by-product of polyamine biosynthesis. Generates hypoxanthine from both the purine salvage pathway and from polyamine metabolism which is required for nucleic acids synthesis. Has no activity towards adenosine. This is Purine nucleoside phosphorylase from Plasmodium falciparum (isolate 3D7).